Reading from the N-terminus, the 582-residue chain is A-type ATP synthase subunit A 1 (582 aa).

231 to 238 (GPFGSGKT) is a binding site for ATP.

Belongs to the ATPase alpha/beta chains family. In terms of assembly, has multiple subunits with at least A(3), B(3), C, D, E, F, H, I and proteolipid K(x).

The protein localises to the cell membrane. It carries out the reaction ATP + H2O + 4 H(+)(in) = ADP + phosphate + 5 H(+)(out). Its function is as follows. Component of the A-type ATP synthase that produces ATP from ADP in the presence of a proton gradient across the membrane. The A chain is the catalytic subunit. In Methanospirillum hungatei JF-1 (strain ATCC 27890 / DSM 864 / NBRC 100397 / JF-1), this protein is A-type ATP synthase subunit A 1.